An 857-amino-acid chain; its full sequence is DNA mismatch repair protein MutS (857 aa).

An ATP-binding site is contributed by 608–615; that stretch reads GPNMSGKS.

It belongs to the DNA mismatch repair MutS family.

Its function is as follows. This protein is involved in the repair of mismatches in DNA. It is possible that it carries out the mismatch recognition step. This protein has a weak ATPase activity. The protein is DNA mismatch repair protein MutS of Lacticaseibacillus casei (strain BL23) (Lactobacillus casei).